Reading from the N-terminus, the 124-residue chain is Small ribosomal subunit protein uS12 (124 aa).

At aspartate 89 the chain carries 3-methylthioaspartic acid.

This sequence belongs to the universal ribosomal protein uS12 family. As to quaternary structure, part of the 30S ribosomal subunit. Contacts proteins S8 and S17. May interact with IF1 in the 30S initiation complex.

Functionally, with S4 and S5 plays an important role in translational accuracy. Interacts with and stabilizes bases of the 16S rRNA that are involved in tRNA selection in the A site and with the mRNA backbone. Located at the interface of the 30S and 50S subunits, it traverses the body of the 30S subunit contacting proteins on the other side and probably holding the rRNA structure together. The combined cluster of proteins S8, S12 and S17 appears to hold together the shoulder and platform of the 30S subunit. This is Small ribosomal subunit protein uS12 from Vibrio campbellii (strain ATCC BAA-1116).